A 409-amino-acid polypeptide reads, in one-letter code: 5-aminolevulinate synthase (409 aa).

Substrate-binding residues include R21, S137, and K156. S189, H217, and T245 together coordinate pyridoxal 5'-phosphate. The active site involves K248. K248 carries the N6-(pyridoxal phosphate)lysine modification. Pyridoxal 5'-phosphate-binding residues include T277 and T278. Position 365 (T365) interacts with substrate.

Belongs to the class-II pyridoxal-phosphate-dependent aminotransferase family. Homodimer. Pyridoxal 5'-phosphate serves as cofactor.

It carries out the reaction succinyl-CoA + glycine + H(+) = 5-aminolevulinate + CO2 + CoA. It functions in the pathway porphyrin-containing compound metabolism; protoporphyrin-IX biosynthesis; 5-aminolevulinate from glycine: step 1/1. In Paracoccus denitrificans (strain Pd 1222), this protein is 5-aminolevulinate synthase (hemA).